The following is a 357-amino-acid chain: Tetraacyldisaccharide 4'-kinase (357 aa).

T49–T56 is a binding site for ATP.

This sequence belongs to the LpxK family.

The catalysed reaction is a lipid A disaccharide + ATP = a lipid IVA + ADP + H(+). The protein operates within glycolipid biosynthesis; lipid IV(A) biosynthesis; lipid IV(A) from (3R)-3-hydroxytetradecanoyl-[acyl-carrier-protein] and UDP-N-acetyl-alpha-D-glucosamine: step 6/6. In terms of biological role, transfers the gamma-phosphate of ATP to the 4'-position of a tetraacyldisaccharide 1-phosphate intermediate (termed DS-1-P) to form tetraacyldisaccharide 1,4'-bis-phosphate (lipid IVA). This is Tetraacyldisaccharide 4'-kinase from Porphyromonas gingivalis (strain ATCC 33277 / DSM 20709 / CIP 103683 / JCM 12257 / NCTC 11834 / 2561).